Here is a 416-residue protein sequence, read N- to C-terminus: Glutamate dehydrogenase A2 (416 aa).

Lysine 105 is an active-site residue.

This sequence belongs to the Glu/Leu/Phe/Val dehydrogenases family. In terms of assembly, homohexamer.

The polypeptide is Glutamate dehydrogenase A2 (gdhA2) (Halobacterium salinarum (strain ATCC 700922 / JCM 11081 / NRC-1) (Halobacterium halobium)).